The chain runs to 443 residues: Acid phosphatase type 7 (443 aa).

An N-terminal signal peptide occupies residues 1–23 (MAAAPPPPPPLLLLLLCVCAVFA). Asn-53, Asn-76, and Asn-126 each carry an N-linked (GlcNAc...) asparagine glycan. Fe cation contacts are provided by Asp-140, Asp-169, and Tyr-172. A Zn(2+)-binding site is contributed by Asp-169. Asn-204 serves as a coordination point for Zn(2+). Asn-210 carries an N-linked (GlcNAc...) asparagine glycan. His-288 provides a ligand contact to Zn(2+). N-linked (GlcNAc...) asparagine glycosylation is present at Asn-313. A Zn(2+)-binding site is contributed by His-338. A Fe cation-binding site is contributed by His-340. Asn-355 and Asn-409 each carry an N-linked (GlcNAc...) asparagine glycan.

The protein belongs to the metallophosphoesterase superfamily. Purple acid phosphatase family. Fe cation is required as a cofactor. The cofactor is Zn(2+).

The protein localises to the secreted. It carries out the reaction a phosphate monoester + H2O = an alcohol + phosphate. The protein is Acid phosphatase type 7 of Danio rerio (Zebrafish).